An 85-amino-acid polypeptide reads, in one-letter code: Protein C4 (85 aa).

Gly-2 is lipidated: N-myristoyl glycine; by host. Residues 42 to 65 form a disordered region; sequence LNPAPTSTPTSTRTETLSNGENSR. Residues 44-59 are compositionally biased toward low complexity; sequence PAPTSTPTSTRTETLS.

The protein belongs to the geminiviridae protein AC4/C4 family.

The protein localises to the host cell membrane. Pathogenicity determinant. May act as a suppressor of RNA-mediated gene silencing, also known as post-transcriptional gene silencing (PTGS), a mechanism of plant viral defense that limits the accumulation of viral RNAs. The polypeptide is Protein C4 (Solanum lycopersicum (Tomato)).